Reading from the N-terminus, the 453-residue chain is 13-hydroxylupanine O-tigloyltransferase (453 aa).

Residues His-166 and Asp-385 each act as proton acceptor in the active site.

The protein belongs to the plant acyltransferase family. Monomer. As to expression, expressed in roots and hypocotyls. Detected in seeds, leaves and cotyledons, but not in young developing leaves.

The catalysed reaction is 13-hydroxylupanine + (2E)-2-methylbut-2-enoyl-CoA = 13-(2-methylcrotonoyloxy)lupanine + CoA. Its activity is regulated as follows. Inhibited by N-ethylmaleimide, p-chloromercuribenzoic acid and diethylpyrocarbonate (DEPC). Acyl-CoA-dependent acyltransferase involved in the synthesis of lupanine alkaloids. Can use both (-)-13alpha-hydroxymultiflorine and (+)-13alpha-hydroxylupanine as substrates. Lower activity with (-)-3beta, 13alpha-dihydroxylupanine, but no activity with (+)-epilupinine and (-)-lupinine as substrates. Tigloyl-CoA, benzoyl-CoA and, more slowly, acetyl-CoA, propionyl-CoA and 2-butenoyl-CoA can act as acyl donors. This is 13-hydroxylupanine O-tigloyltransferase (HMT/HLT) from Lupinus albus (White lupine).